Reading from the N-terminus, the 603-residue chain is Elongation factor 4 (603 aa).

In terms of domain architecture, tr-type G spans 7 to 189 (KKIRNFCIIA…SVVKNVPPPE (183 aa)). Residues 19-24 (DHGKST) and 136-139 (NKID) contribute to the GTP site.

The protein belongs to the TRAFAC class translation factor GTPase superfamily. Classic translation factor GTPase family. LepA subfamily.

It localises to the cell membrane. The catalysed reaction is GTP + H2O = GDP + phosphate + H(+). In terms of biological role, required for accurate and efficient protein synthesis under certain stress conditions. May act as a fidelity factor of the translation reaction, by catalyzing a one-codon backward translocation of tRNAs on improperly translocated ribosomes. Back-translocation proceeds from a post-translocation (POST) complex to a pre-translocation (PRE) complex, thus giving elongation factor G a second chance to translocate the tRNAs correctly. Binds to ribosomes in a GTP-dependent manner. The protein is Elongation factor 4 of Acetivibrio thermocellus (strain ATCC 27405 / DSM 1237 / JCM 9322 / NBRC 103400 / NCIMB 10682 / NRRL B-4536 / VPI 7372) (Clostridium thermocellum).